A 194-amino-acid polypeptide reads, in one-letter code: Imidazoleglycerol-phosphate dehydratase (194 aa).

The protein belongs to the imidazoleglycerol-phosphate dehydratase family.

It is found in the cytoplasm. The enzyme catalyses D-erythro-1-(imidazol-4-yl)glycerol 3-phosphate = 3-(imidazol-4-yl)-2-oxopropyl phosphate + H2O. It functions in the pathway amino-acid biosynthesis; L-histidine biosynthesis; L-histidine from 5-phospho-alpha-D-ribose 1-diphosphate: step 6/9. The sequence is that of Imidazoleglycerol-phosphate dehydratase from Listeria monocytogenes serovar 1/2a (strain ATCC BAA-679 / EGD-e).